A 259-amino-acid polypeptide reads, in one-letter code: Cell division protein FtsQ (259 aa).

Topologically, residues 1-15 (MTRDQTATFGRHALR) are cytoplasmic. The helical transmembrane segment at 16–36 (VAGSGLLVAGVVALGLLGWQW) threads the bilayer. The Periplasmic segment spans residues 37-259 (RANVTVDRVA…VVTRTRPLDG (223 aa)). A POTRA domain is found at 40–109 (VTVDRVAVTG…GALTISVTER (70 aa)).

The protein belongs to the FtsQ/DivIB family. FtsQ subfamily.

Its subcellular location is the cell inner membrane. Its function is as follows. Essential cell division protein. The sequence is that of Cell division protein FtsQ from Salinibacter ruber (strain DSM 13855 / M31).